The primary structure comprises 954 residues: Valine--tRNA ligase (954 aa).

The 'HIGH' region signature appears at 48–58 (PNVTGSLHMGH). The 'KMSKS' region motif lies at 560–564 (KMSKS). Residue Lys563 participates in ATP binding. Residues 886–954 (INKDTELARL…RAQYLSIENL (69 aa)) adopt a coiled-coil conformation.

This sequence belongs to the class-I aminoacyl-tRNA synthetase family. ValS type 1 subfamily. As to quaternary structure, monomer.

The protein resides in the cytoplasm. It carries out the reaction tRNA(Val) + L-valine + ATP = L-valyl-tRNA(Val) + AMP + diphosphate. In terms of biological role, catalyzes the attachment of valine to tRNA(Val). As ValRS can inadvertently accommodate and process structurally similar amino acids such as threonine, to avoid such errors, it has a 'posttransfer' editing activity that hydrolyzes mischarged Thr-tRNA(Val) in a tRNA-dependent manner. This is Valine--tRNA ligase from Mannheimia succiniciproducens (strain KCTC 0769BP / MBEL55E).